We begin with the raw amino-acid sequence, 101 residues long: Movement protein (101 aa).

Residues 30-50 (EVAILSFVALICFYLLYLWVL) traverse the membrane as a helical segment. The interval 75–101 (VDRSNPIPNLPAPPSQGNPGPFVPGTG) is disordered.

It belongs to the mastrevirus movement protein family. In terms of assembly, interacts with the capsid protein (CP). Part of a MP-CP-viral DNA complex.

It is found in the host membrane. In terms of biological role, involved in the viral transport within, and between cells. The chain is Movement protein from Maize streak virus genotype A (isolate South Africa) (MSV).